Reading from the N-terminus, the 146-residue chain is Antirestriction protein KlcA (146 aa).

Belongs to the antirestriction protein family.

Could be involved in overcoming restriction barriers during establishment after conjugative transfer. This Escherichia coli protein is Antirestriction protein KlcA (klcA).